We begin with the raw amino-acid sequence, 1067 residues long: [F-actin]-monooxygenase MICAL1 (1067 aa).

The tract at residues 1 to 489 (MASPTSTNPA…RDLYDVLAKE (489 aa)) is monooxygenase domain. Residues Cys-95, 114-116 (EKR), 121-123 (RHN), Phe-181, Tyr-293, and Asp-393 each bind FAD. Thr-475 bears the Phosphothreonine mark. Residues 508 to 612 (AGTQEELLRW…YLSHFHSAFK (105 aa)) form the Calponin-homology (CH) domain. Ser-617 carries the post-translational modification Phosphoserine. A disordered region spans residues 645-688 (SRAKENAEDAGGKKLRLEMEAETPSTEVPPDPEPGVPLTPPSQH). The span at 646–663 (RAKENAEDAGGKKLRLEM) shows a compositional bias: basic and acidic residues. A coiled-coil region spans residues 646-666 (RAKENAEDAGGKKLRLEMEAE). A compositionally biased stretch (pro residues) spans 671–684 (EVPPDPEPGVPLTP). Residues 695–757 (DLCALCGEHL…LQHLPQTDHK (63 aa)) enclose the LIM zinc-binding domain. Residues Cys-697, Cys-700, His-718, Cys-721, Cys-724, Cys-727, Cys-747, and His-750 each coordinate Zn(2+). The span at 755-766 (DHKAEGSDRGPE) shows a compositional bias: basic and acidic residues. Disordered stretches follow at residues 755–838 (DHKA…RSCS) and 867–886 (KEEK…VPLD). A compositionally biased stretch (polar residues) spans 773-789 (PSENSMPPGLSTPTASQ). A phosphoserine mark is found at Ser-872, Ser-875, and Ser-876. Positions 876–886 (SEEEEEDVPLD) are enriched in acidic residues. The interval 901-1067 (GTMNNYPTWR…ELALGTGAQG (167 aa)) is important for interaction with RAB8A. In terms of domain architecture, bMERB spans 918-1067 (KEEEMKRFCK…ELALGTGAQG (150 aa)). Coiled-coil stretches lie at residues 919–962 (EEEM…QSSS) and 999–1027 (NLEE…AADR). Ser-1057 bears the Phosphoserine mark.

The protein belongs to the Mical family. As to quaternary structure, interacts with STK38 and STK38L. Interacts with RAB1B, RAB8A, RAB10, RAB13, RAB15 and RAB35 (in their GTP-bound forms); binding to RAB1B is of low affinity compared to other Rab proteins; at least in case of RAB8A and RAB10 can bind 2 molecules of the Rab proteins simultaneously; ternary complex formation of RAB8A, RAB13 and MICAL1 is possible. Associates with the SH3 domain of NEDD9. Interacts with VIM and PLXNA3. Interacts with GRAF1/ARHGAP26, GRAF2/ARHGAP10, RAB8A, RAB8B and RAB10; may bind simultaneously to GRAFs and Rabs and connects GRAFs to Rabs. Does not interact with RAB1 and RAB11A. FAD serves as cofactor. As to expression, expressed in the thymus, lung, spleen, kidney, testis and hematopoietic cells.

It is found in the cytoplasm. The protein localises to the cytoskeleton. Its subcellular location is the endosome membrane. It localises to the midbody. The catalysed reaction is L-methionyl-[F-actin] + NADPH + O2 + H(+) = L-methionyl-(R)-S-oxide-[F-actin] + NADP(+) + H2O. The enzyme catalyses NADPH + O2 + H(+) = H2O2 + NADP(+). Monooxygenase that promotes depolymerization of F-actin by mediating oxidation of specific methionine residues on actin to form methionine-sulfoxide, resulting in actin filament disassembly and preventing repolymerization. In the absence of actin, it also functions as a NADPH oxidase producing H(2)O(2). Acts as a cytoskeletal regulator that connects NEDD9 to intermediate filaments. Also acts as a negative regulator of apoptosis via its interaction with STK38 and STK38L; acts by antagonizing STK38 and STK38L activation by MST1/STK4. Involved in regulation of lamina-specific connectivity in the nervous system such as the development of lamina-restricted hippocampal connections. Through redox regulation of the actin cytoskeleton controls the intracellular distribution of secretory vesicles containing L1/neurofascin/NgCAM family proteins in neurons, thereby regulating their cell surface levels. May act as Rab effector protein and play a role in vesicle trafficking. Promotes endosomal tubule extension by associating with RAB8 (RAB8A or RAB8B), RAB10 and GRAF (GRAF1/ARHGAP26 or GRAF2/ARHGAP10) on the endosomal membrane which may connect GRAFs to Rabs, thereby participating in neosynthesized Rab8-Rab10-Rab11-dependent protein export. The sequence is that of [F-actin]-monooxygenase MICAL1 (MICAL1) from Homo sapiens (Human).